Consider the following 1010-residue polypeptide: PHD finger protein 20 (1010 aa).

Tudor domains are found at residues 4 to 69 (HPPN…RPLE) and 83 to 147 (GSSE…GNAR). Disordered regions lie at residues 142-373 (IVGN…EGQL) and 483-609 (EKSP…GKLK). Positions 147–246 (RPKETDHKSL…VEKKPEKDLV (100 aa)) are enriched in basic and acidic residues. Phosphoserine is present on serine 159. The segment at residues 257 to 269 (KRKRGRPPSITPT) is a DNA-binding region (a.T hook). Polar residues predominate over residues 267–280 (TPTAVDSNSQTLQP). Composition is skewed to basic and acidic residues over residues 292-325 (KRSD…DLSR), 483-493 (EKSPEPEEGPG), and 525-541 (AKEK…ELVR). Residues 455–485 (FRCKVLDCLKFFRKAKLLHYHMKYFHGMEKS) form a C2H2-type zinc finger. Basic residues predominate over residues 542–554 (VKPKKKKKKKKKT). A PHD-type zinc finger spans residues 657–703 (RCICEVQEENDFMIQCEECQCWQHGVCMGLLEENVPEKYTCYVCQDP). Residues 804–827 (RSEESPSYRTLNGAVEKPSPLPRS) form a disordered region. Residue lysine 841 is modified to N6-acetyllysine. Phosphoserine is present on residues serine 876 and serine 878. The disordered stretch occupies residues 877-902 (LSPRLGWPIDQDRSRGDIDPKPSSPK). The segment covering 886-902 (DQDRSRGDIDPKPSSPK) has biased composition (basic and acidic residues).

In terms of assembly, homodimer; disulfide-linked. Component of some MLL1/MLL complex, at least composed of the core components KMT2A/MLL1, ASH2L, HCFC1, WDR5 and RBBP5, as well as the facultative components BACC1, CHD8, E2F6, HSP70, INO80C, KANSL1, LAS1L, MAX, MCRS1, MGA, MYST1/MOF, PELP1, PHF20, PRP31, RING2, RUVB1/TIP49A, RUVB2/TIP49B, SENP3, TAF1, TAF4, TAF6, TAF7, TAF9 and TEX10. Component of the NSL complex at least composed of MOF/KAT8, KANSL1, KANSL2, KANSL3, MCRS1, PHF20, OGT1/OGT, WDR5 and HCFC1. Ubiquitinated by TRIM26; leading to proteasomal degradation.

The protein localises to the nucleus. Its function is as follows. Contributes to methyllysine-dependent p53/TP53 stabilization and up-regulation after DNA damage. Methyllysine-binding protein, component of the MOF histone acetyltransferase protein complex. Not required for maintaining the global histone H4 'Lys-16' acetylation (H4K16ac) levels or locus specific histone acetylation, but instead works downstream in transcriptional regulation of MOF target genes. As part of the NSL complex it may be involved in acetylation of nucleosomal histone H4 on several lysine residues. The chain is PHD finger protein 20 (Phf20) from Mus musculus (Mouse).